A 551-amino-acid polypeptide reads, in one-letter code: Chaperonin GroEL (551 aa).

Residues 30–33, lysine 51, 87–91, glycine 415, and aspartate 496 each bind ATP; these read TLGP and DGTTT.

It belongs to the chaperonin (HSP60) family. In terms of assembly, forms a cylinder of 14 subunits composed of two heptameric rings stacked back-to-back. Interacts with the co-chaperonin GroES.

The protein localises to the cytoplasm. The catalysed reaction is ATP + H2O + a folded polypeptide = ADP + phosphate + an unfolded polypeptide.. In terms of biological role, together with its co-chaperonin GroES, plays an essential role in assisting protein folding. The GroEL-GroES system forms a nano-cage that allows encapsulation of the non-native substrate proteins and provides a physical environment optimized to promote and accelerate protein folding. In Maricaulis maris (strain MCS10) (Caulobacter maris), this protein is Chaperonin GroEL.